Reading from the N-terminus, the 702-residue chain is Polyribonucleotide nucleotidyltransferase (702 aa).

Positions 485 and 491 each coordinate Mg(2+). Residues 552 to 612 enclose the KH domain; the sequence is PRTEIICIDP…EGVKKAISII (61 aa). The S1 motif domain occupies 622–690; sequence GEIYLGKVTK…NQGRINLSRK (69 aa).

The protein belongs to the polyribonucleotide nucleotidyltransferase family. Mg(2+) is required as a cofactor.

Its subcellular location is the cytoplasm. It carries out the reaction RNA(n+1) + phosphate = RNA(n) + a ribonucleoside 5'-diphosphate. In terms of biological role, involved in mRNA degradation. Catalyzes the phosphorolysis of single-stranded polyribonucleotides processively in the 3'- to 5'-direction. The polypeptide is Polyribonucleotide nucleotidyltransferase (Clostridium botulinum (strain Langeland / NCTC 10281 / Type F)).